The chain runs to 136 residues: Nucleoside diphosphate kinase (136 aa).

Lys10, Phe58, Arg86, Thr92, Arg104, and Asn114 together coordinate ATP. Catalysis depends on His117, which acts as the Pros-phosphohistidine intermediate.

It belongs to the NDK family. In terms of assembly, homohexamer. Mg(2+) serves as cofactor.

The protein resides in the cytoplasm. The enzyme catalyses a 2'-deoxyribonucleoside 5'-diphosphate + ATP = a 2'-deoxyribonucleoside 5'-triphosphate + ADP. The catalysed reaction is a ribonucleoside 5'-diphosphate + ATP = a ribonucleoside 5'-triphosphate + ADP. Its function is as follows. Major role in the synthesis of nucleoside triphosphates other than ATP. The ATP gamma phosphate is transferred to the NDP beta phosphate via a ping-pong mechanism, using a phosphorylated active-site intermediate. The polypeptide is Nucleoside diphosphate kinase (Mycobacterium bovis (strain ATCC BAA-935 / AF2122/97)).